Reading from the N-terminus, the 85-residue chain is F1845 adhesin operon regulatory protein (85 aa).

Functionally, regulates the transcription of genes involved in the biosynthesis of F1845 fimbrial adhesin. This Escherichia coli protein is F1845 adhesin operon regulatory protein (daaA).